The sequence spans 696 residues: Gametogenetin-binding protein 2 (696 aa).

Residues S360 and S602 each carry the phosphoserine modification.

In terms of assembly, interacts with isoform 1 of GGN. In terms of tissue distribution, testis-specific.

It is found in the cytoplasmic vesicle. May be involved in spermatogenesis. The chain is Gametogenetin-binding protein 2 (Ggnbp2) from Mus musculus (Mouse).